The sequence spans 88 residues: Small ribosomal subunit protein bS20 (88 aa).

The protein belongs to the bacterial ribosomal protein bS20 family.

Binds directly to 16S ribosomal RNA. This chain is Small ribosomal subunit protein bS20, found in Legionella pneumophila (strain Paris).